Consider the following 403-residue polypeptide: Acetyl-CoA acetyltransferase 2 (403 aa).

Cys97 acts as the Acyl-thioester intermediate in catalysis. CoA is bound at residue Lys237. Ala254 contributes to the K(+) binding site. Ser258 contributes to the CoA binding site. Val355 is a K(+) binding site. Residues His359 and Cys389 each act as proton acceptor in the active site.

This sequence belongs to the thiolase-like superfamily. Thiolase family. As to expression, expressed in root tips, emerging leaves, young leaves, stems, and anthers at the microspore stage.

The protein resides in the cytoplasm. It localises to the peroxisome. The enzyme catalyses 2 acetyl-CoA = acetoacetyl-CoA + CoA. Its pathway is metabolic intermediate biosynthesis; (R)-mevalonate biosynthesis; (R)-mevalonate from acetyl-CoA: step 1/3. Functionally, catalyzes the condensation of two molecules of acetyl-CoA to produce acetoacetyl-CoA. Generates the bulk of the acetoacetyl-CoA precursor required for the cytosol-localized, mevalonate-derived isoprenoid biosynthesis. The generated isoprenoids are required for normal growth and development. Essential protein during embryogenesis. This is Acetyl-CoA acetyltransferase 2 from Arabidopsis thaliana (Mouse-ear cress).